A 57-amino-acid polypeptide reads, in one-letter code: Potassium channel toxin KTx1 (57 aa).

The N-terminal stretch at 1 to 13 (FLVLLLVSLMCYA) is a signal peptide. The propeptide occupies 14–18 (EIAEG). 3 cysteine pairs are disulfide-bonded: cysteine 24–cysteine 37, cysteine 30–cysteine 42, and cysteine 36–cysteine 51.

This sequence belongs to the scorpion calcin-like family. KTX subfamily. As to expression, expressed by the venom gland.

The protein resides in the secreted. This recombinant peptide inhibits voltage-gated potassium channels mKv1.3/KCNA3 (IC(50)=1.70 uM), mKv1.1/KCNA1 (10 uM inhibits 40% of currents) and hKv1.2/KCNA2 (10 uM inhibits 42% of currents). May also increase intracellular calcium release through the activation of nuclear inositol 1,4,5-trisphosphate receptors (ITPR) of cardiomyocytes, thereby causing an increase in the contraction frequency of these cells. This Isometrus maculatus (Lesser brown scorpion) protein is Potassium channel toxin KTx1.